Reading from the N-terminus, the 253-residue chain is Ipsdienol dehydrogenase (253 aa).

NAD(+) is bound by residues 12 to 40 and Asp63; that span reads VTGG…FSRN. Substrate is bound at residue Ser149. The active-site Proton acceptor is Tyr162. An NAD(+)-binding site is contributed by Lys166.

The protein belongs to the short-chain dehydrogenases/reductases (SDR) family. In terms of tissue distribution, specifically expressed in male midguts. Expressed at higher level in the anterior midgut of fed males.

Its subcellular location is the cytoplasm. It is found in the cytosol. The catalysed reaction is (4R)-ipsdienol + NADP(+) = ipsdienone + NADPH + H(+). It catalyses the reaction (4R)-ipsdienol + NAD(+) = ipsdienone + NADH + H(+). Functionally, catalyzes the oxidation of racemic ipsdienol and (4R)-(-)-ipsdienol to form ipsdienone (2-methyl-6-methylene-2,7-octadien-4-one), an intermediate in the biosynthesis of pheromonal ipsdienol in male pine engraver beetles. In contrast, (4S)-(+)-ipsdienol is not a substrate. This is Ipsdienol dehydrogenase from Ips pini (Pine engraver beetle).